Reading from the N-terminus, the 249-residue chain is tRNA pseudouridine synthase A (249 aa).

Residue aspartate 53 is the Nucleophile of the active site. Position 111 (tyrosine 111) interacts with substrate.

This sequence belongs to the tRNA pseudouridine synthase TruA family. As to quaternary structure, homodimer.

It carries out the reaction uridine(38/39/40) in tRNA = pseudouridine(38/39/40) in tRNA. In terms of biological role, formation of pseudouridine at positions 38, 39 and 40 in the anticodon stem and loop of transfer RNAs. The chain is tRNA pseudouridine synthase A from Streptococcus gordonii (strain Challis / ATCC 35105 / BCRC 15272 / CH1 / DL1 / V288).